The chain runs to 119 residues: NADH-quinone oxidoreductase subunit A (119 aa).

3 helical membrane passes run 7–27 (FPVLLFLVVGTGLGVALVSIG), 63–83 (LVAILFIIFDLETAFLFPWGV), and 88–108 (IGWPGFLAMMIFLLEFLLGFA).

The protein belongs to the complex I subunit 3 family. NDH-1 is composed of 14 different subunits. Subunits NuoA, H, J, K, L, M, N constitute the membrane sector of the complex.

Its subcellular location is the cell inner membrane. It catalyses the reaction a quinone + NADH + 5 H(+)(in) = a quinol + NAD(+) + 4 H(+)(out). NDH-1 shuttles electrons from NADH, via FMN and iron-sulfur (Fe-S) centers, to quinones in the respiratory chain. The immediate electron acceptor for the enzyme in this species is believed to be ubiquinone. Couples the redox reaction to proton translocation (for every two electrons transferred, four hydrogen ions are translocated across the cytoplasmic membrane), and thus conserves the redox energy in a proton gradient. In Paraburkholderia phytofirmans (strain DSM 17436 / LMG 22146 / PsJN) (Burkholderia phytofirmans), this protein is NADH-quinone oxidoreductase subunit A.